Consider the following 388-residue polypeptide: Chaperone protein DnaJ 1 (388 aa).

A J domain is found at 10 to 74 (DFYKELGVSS…VKRKEYDETR (65 aa)). A CR-type zinc finger spans residues 159-237 (GVAMPLRLTS…CKGTGVTTRT (79 aa)). Positions 172, 175, 189, 192, 211, 214, 225, and 228 each coordinate Zn(2+). CXXCXGXG motif repeat units lie at residues 172–179 (CTNCHGSG), 189–196 (CSTCNGSG), 211–218 (CTECRGSG), and 225–232 (CEECKGTG).

Belongs to the DnaJ family. In terms of assembly, homodimer. Zn(2+) is required as a cofactor.

The protein localises to the cytoplasm. Functionally, participates actively in the response to hyperosmotic and heat shock by preventing the aggregation of stress-denatured proteins and by disaggregating proteins, also in an autonomous, DnaK-independent fashion. Unfolded proteins bind initially to DnaJ; upon interaction with the DnaJ-bound protein, DnaK hydrolyzes its bound ATP, resulting in the formation of a stable complex. GrpE releases ADP from DnaK; ATP binding to DnaK triggers the release of the substrate protein, thus completing the reaction cycle. Several rounds of ATP-dependent interactions between DnaJ, DnaK and GrpE are required for fully efficient folding. Also involved, together with DnaK and GrpE, in the DNA replication of plasmids through activation of initiation proteins. This is Chaperone protein DnaJ 1 from Mycobacterium leprae (strain TN).